A 1193-amino-acid polypeptide reads, in one-letter code: uncharacterized protein (1193 aa).

The first 25 residues, 1 to 25 (MKIKFINYLLLFFIIFLNYNGFVKS), serve as a signal peptide directing secretion. At 26-1172 (DCYQELDLVL…PQDPSDELST (1147 aa)) the chain is on the extracellular side. 18 N-linked (GlcNAc...) asparagine glycosylation sites follow: asparagine 90, asparagine 183, asparagine 226, asparagine 265, asparagine 281, asparagine 345, asparagine 357, asparagine 436, asparagine 516, asparagine 552, asparagine 583, asparagine 627, asparagine 712, asparagine 765, asparagine 822, asparagine 938, asparagine 1038, and asparagine 1092. The helical transmembrane segment at 1173 to 1193 (SSFVQVNLLFLSILIFTIFIF) threads the bilayer.

The protein localises to the membrane. This is an uncharacterized protein from Dictyostelium discoideum (Social amoeba).